The chain runs to 815 residues: SNF1 protein kinase subunit beta-1 (815 aa).

The span at Met-1 to Ser-11 shows a compositional bias: polar residues. Disordered regions lie at residues Met-1 to Lys-88 and Ser-117 to Lys-148. Gly-2 carries N-myristoyl glycine lipidation. Basic and acidic residues predominate over residues His-12–Gln-31. Polar residues predominate over residues Gly-32–Arg-42. Ser-33 carries the post-translational modification Phosphoserine. 2 stretches are compositionally biased toward basic and acidic residues: residues Pro-72 to Lys-88 and Ser-117 to Val-129. Ser-181, Ser-198, Ser-200, Ser-206, Ser-209, and Ser-220 each carry phosphoserine. 3 disordered regions span residues Ser-310 to Phe-335, His-363 to Leu-389, and Pro-410 to Ser-444. Residues Asn-313–Gly-326 are compositionally biased toward low complexity. Phosphoserine is present on Ser-331. Positions His-363–Arg-376 are enriched in basic residues. 2 stretches are compositionally biased toward low complexity: residues Ser-377–Leu-389 and His-433–Ser-444. The segment at Val-473–Glu-716 is kinase-interacting sequence (KIS); required for interaction with SNF1. Phosphoserine is present on residues Ser-494 and Ser-497. The interval Thr-583–Ser-616 is disordered. Positions Glu-587–Arg-596 are enriched in basic and acidic residues. A compositionally biased stretch (low complexity) spans Ser-599–Ser-608. Position 643 is a phosphoserine (Ser-643). The segment at Ser-724–Cys-804 is association with SNF1 kinase complex (ASC) domain; required for interaction with SNF4.

This sequence belongs to the 5'-AMP-activated protein kinase beta subunit family. As to quaternary structure, component of the SNF1 kinase complex, a heterotrimeric complex composed of the catalytic alpha subunit SNF1, one of the three related beta subunits SIP1, SIP2 or GAL83, and the regulatory gamma subunit SNF4. The beta subunit serves as a bridge between the catalytic and the regulatory subunit. Interacts (via KIS domain) with SNF1. Interacts (via ASC domain) with SNF4. Phosphorylated by SNF1 in vitro.

Its subcellular location is the cytoplasm. It localises to the vacuole membrane. In terms of biological role, beta subunit of the SNF1 kinase complex, which is required for transcriptional, metabolic, and developmental adaptations in response to glucose limitation. Has a structural role, mediating heterotrimer formation, and a regulatory role, defining carbon source-regulated subcellular location and substrate specificity of the SNF1 kinase complex. Promotes the PKA-regulated relocalization of the SNF1 kinase complex to the vacuolar membrane in response to various types of carbon stress. The protein is SNF1 protein kinase subunit beta-1 (SIP1) of Saccharomyces cerevisiae (strain YJM789) (Baker's yeast).